A 356-amino-acid chain; its full sequence is Dihydroorotate dehydrogenase (quinone) (356 aa).

Residues 67–71 (PGFDK) and Thr-91 contribute to the FMN site. Substrate is bound at residue Lys-71. 116 to 120 (NRMGF) serves as a coordination point for substrate. Residues Asn-147 and Asn-178 each coordinate FMN. Asn-178 serves as a coordination point for substrate. The active-site Nucleophile is the Ser-181. Substrate is bound at residue Asn-183. Positions 218 and 246 each coordinate FMN. 247 to 248 (NT) lines the substrate pocket. Residues Gly-268, Gly-297, and 318–319 (YS) contribute to the FMN site.

It belongs to the dihydroorotate dehydrogenase family. Type 2 subfamily. Monomer. The cofactor is FMN.

Its subcellular location is the cell membrane. The enzyme catalyses (S)-dihydroorotate + a quinone = orotate + a quinol. It functions in the pathway pyrimidine metabolism; UMP biosynthesis via de novo pathway; orotate from (S)-dihydroorotate (quinone route): step 1/1. In terms of biological role, catalyzes the conversion of dihydroorotate to orotate with quinone as electron acceptor. The sequence is that of Dihydroorotate dehydrogenase (quinone) from Sphingopyxis alaskensis (strain DSM 13593 / LMG 18877 / RB2256) (Sphingomonas alaskensis).